A 341-amino-acid chain; its full sequence is Cysteine-rich with EGF-like domain protein 2 (341 aa).

Positions 1 to 24 (MLLSCSIFRLFCIILLLQLGSIYT) are cleaved as a signal peptide. The EGF-like domain maps to 136–178 (DCNTCIGGADRPCHGNGKCDGDGTRAGNGKCSCDEGYDGEFCL). 3 disulfide bridges follow: C140–C154, C148–C166, and C168–C177. N190 carries an N-linked (GlcNAc...) asparagine glycan. 2 FU repeats span residues 193–248 (FFLC…DQYC) and 254–308 (SFSC…NQHC). The EGF-like 2; calcium-binding; truncated domain occupies 291 to 317 (DIDECTEDPASCSDNQHCLNTDGSFSC).

This sequence belongs to the CRELD family.

It is found in the secreted. It localises to the endoplasmic reticulum. Functionally, possible role in neuronal acetylcholine receptor transport. This chain is Cysteine-rich with EGF-like domain protein 2 (creld2), found in Danio rerio (Zebrafish).